A 227-amino-acid chain; its full sequence is Large ribosomal subunit protein uL3 (227 aa).

Gln158 is modified (N5-methylglutamine).

This sequence belongs to the universal ribosomal protein uL3 family. In terms of assembly, part of the 50S ribosomal subunit. Forms a cluster with proteins L14 and L19. Post-translationally, methylated by PrmB.

In terms of biological role, one of the primary rRNA binding proteins, it binds directly near the 3'-end of the 23S rRNA, where it nucleates assembly of the 50S subunit. This is Large ribosomal subunit protein uL3 from Polaromonas sp. (strain JS666 / ATCC BAA-500).